The following is a 617-amino-acid chain: NADPH-dependent diflavin oxidoreductase 1 (617 aa).

The Flavodoxin-like domain maps to 3–147 (PMILYASETG…AFLPWLQQTL (145 aa)). FMN is bound by residues 9–14 (SETGNA), 56–59 (STHG), 94–103 (LGDSSYERFC), and glutamate 129. The FAD-binding FR-type domain maps to 226–465 (DDWVWATLKK…HIASPTLFLP (240 aa)). Residues 404 to 407 (RQFS) and 438 to 441 (GLCS) contribute to the FAD site. Residues threonine 479, 534–535 (SR), and 540–544 (RIYVQ) each bind NADP(+). An FAD-binding site is contributed by tryptophan 617.

This sequence belongs to the NADPH-dependent diflavin oxidoreductase NDOR1 family. It in the N-terminal section; belongs to the flavodoxin family. In the C-terminal section; belongs to the flavoprotein pyridine nucleotide cytochrome reductase family. As to quaternary structure, interacts with DRE2; as part of the cytosolic iron-sulfur (Fe-S) protein assembly (CIA) machinery. Requires FAD as cofactor. It depends on FMN as a cofactor.

It is found in the cytoplasm. It localises to the mitochondrion. It catalyses the reaction 2 oxidized [2Fe-2S]-[protein] + NADPH = 2 reduced [2Fe-2S]-[protein] + NADP(+) + H(+). In terms of biological role, NADPH-dependent reductase which is a central component of the cytosolic iron-sulfur (Fe-S) protein assembly (CIA) machinery. Transfers electrons from NADPH via its FAD and FMN prosthetic groups to the [2Fe-2S] cluster of DRE2, another key component of the CIA machinery. In turn, this reduced cluster provides electrons for assembly of cytosolic iron-sulfur cluster proteins. Positively controls H(2)O(2)-induced cell death. The protein is NADPH-dependent diflavin oxidoreductase 1 of Cryptococcus neoformans var. neoformans serotype D (strain B-3501A) (Filobasidiella neoformans).